The following is a 146-amino-acid chain: 3-dehydroquinate dehydratase (146 aa).

Catalysis depends on tyrosine 24, which acts as the Proton acceptor. Substrate-binding residues include asparagine 75, histidine 81, and aspartate 88. Histidine 101 (proton donor) is an active-site residue. Substrate contacts are provided by residues 102–103 (LS) and arginine 112.

Belongs to the type-II 3-dehydroquinase family. Homododecamer.

It catalyses the reaction 3-dehydroquinate = 3-dehydroshikimate + H2O. Its pathway is metabolic intermediate biosynthesis; chorismate biosynthesis; chorismate from D-erythrose 4-phosphate and phosphoenolpyruvate: step 3/7. Its function is as follows. Catalyzes a trans-dehydration via an enolate intermediate. The polypeptide is 3-dehydroquinate dehydratase (Caulobacter vibrioides (strain ATCC 19089 / CIP 103742 / CB 15) (Caulobacter crescentus)).